We begin with the raw amino-acid sequence, 141 residues long: MNIALIAHDKKKELMVQFAIAYKFILSKHTLYATGTTGRLIQEATGLEVHRFLPGPLGGDQQIGSLIAYNQIDMVIFLRDPLTAQPHEPDVNALLRLCDVHNIPLATNIATAELLIKALDRGDLSWREIVNPKLQKNKSDK.

The MGS-like domain occupies 1–141; that stretch reads MNIALIAHDK…PKLQKNKSDK (141 aa). Substrate is bound by residues histidine 8, lysine 12, and 34–37; that span reads TGTT. Aspartate 60 (proton donor/acceptor) is an active-site residue. A substrate-binding site is contributed by histidine 87.

It belongs to the methylglyoxal synthase family.

It catalyses the reaction dihydroxyacetone phosphate = methylglyoxal + phosphate. Its function is as follows. Catalyzes the formation of methylglyoxal from dihydroxyacetone phosphate. This is Methylglyoxal synthase from Caldicellulosiruptor bescii (strain ATCC BAA-1888 / DSM 6725 / KCTC 15123 / Z-1320) (Anaerocellum thermophilum).